We begin with the raw amino-acid sequence, 879 residues long: Band 4.1-like protein 1 (879 aa).

The interval 1–64 is disordered; sequence MTTETGPDSE…RPAEQSLDME (64 aa). Over residues 17-35 the composition is skewed to low complexity; that stretch reads ETPQQPEAAAAVTTPVTPA. Position 30 is a phosphothreonine (threonine 30). Residues 38-50 show a composition bias toward basic and acidic residues; sequence SHPETNSNEKHLT. Phosphoserine is present on serine 75. Threonine 79 carries the phosphothreonine modification. One can recognise an FERM domain in the interval 97-378; the sequence is ATCRVTLLDA…EHHTFFRLVS (282 aa). Residue tyrosine 343 is modified to Phosphotyrosine. Phosphoserine is present on residues serine 378, serine 430, serine 437, serine 461, and serine 466. Positions 428–501 are disordered; sequence SRSLDGAEFS…HKQEFLDKPE (74 aa). Residues 444–501 show a composition bias toward basic and acidic residues; that stretch reads ENHDAGPDGDKREDDAESGGRRSEAEEGEVRTPTKIKELKPEQETTPRHKQEFLDKPE. A Phosphothreonine modification is found at threonine 475. Residues 483–541 are spectrin--actin-binding; the sequence is KPEQETTPRHKQEFLDKPEDVLLKHQASINELKRTLKEPNSKLIHRDRDWERERRLPSS. Serine 510 bears the Phosphoserine mark. Residues 514-538 show a composition bias toward basic and acidic residues; it reads LKRTLKEPNSKLIHRDRDWERERRL. 3 disordered regions span residues 514 to 596, 633 to 687, and 718 to 742; these read LKRT…FLKD, FEDF…STPE, and SRVSTADSTQVDGGAPAAKDFMTTP. A phosphoserine mark is found at serine 540, serine 541, serine 544, and serine 546. The residue at position 550 (threonine 550) is a Phosphothreonine. Over residues 550-577 the composition is skewed to basic and acidic residues; sequence TPEKASERAGLREGSEEKVKPPRPRAPE. Phosphoserine occurs at positions 564 and 578. Threonine 580 bears the Phosphothreonine mark. A phosphoserine mark is found at glutamate 583, glutamine 587, serine 639, serine 648, serine 650, serine 665, serine 666, aspartate 669, serine 671, serine 677, and serine 684. The segment covering 635 to 650 has biased composition (basic and acidic residues); that stretch reads DFSRSLPELDRDKSDS. Threonine 685 carries the post-translational modification Phosphothreonine. The segment covering 718 to 728 has biased composition (polar residues); it reads SRVSTADSTQV. Serine 721, proline 742, alanine 766, serine 782, and serine 868 each carry phosphoserine. The tract at residues 744–879 is C-terminal (CTD); that stretch reads CITTETISTT…EERDKKPQES (136 aa).

As to quaternary structure, interacts with AGAP2. In terms of tissue distribution, highest expression in brain, lower in heart and kidney. Within the brain, highest expression in cerebellum.

The protein localises to the cytoplasm. Its subcellular location is the cytoskeleton. May function to confer stability and plasticity to neuronal membrane via multiple interactions, including the spectrin-actin-based cytoskeleton, integral membrane channels and membrane-associated guanylate kinases. This is Band 4.1-like protein 1 from Rattus norvegicus (Rat).